We begin with the raw amino-acid sequence, 121 residues long: uncharacterized protein (121 aa).

2 disordered regions span residues 1–28 (MGCA…QNGD) and 60–82 (QENL…VPGL). Ser95 and Ser115 each carry phosphoserine.

In terms of tissue distribution, expressed in spleen, prostate, testis and uterus.

This is an uncharacterized protein from Homo sapiens (Human).